Consider the following 316-residue polypeptide: MSDASLRSTSTMERLVARGTFPVLVRTSACRSLFGPVDHEELSRELQARLAELNAEDQNRWDYDFQQDMPLRGPGRLQWTEVDSDSVPAFYRETVQVGRCRLLLAPRPVAVAVAVSPPLEPAAESLDGLEEAPEQLPSVPVPAPASTPPPVPVLAPAPAPAPAPVAAPVAAPVAVAVLAPAPAPAPAPAPAPAPVAAPAPAPAPAPAPAPAPAPAPDAAPQESAEQGANQGQRGQEPLADQLHSGISGRPAAGTAAASANGAAIKKLSGPLISDFFAKRKRSAPEKSSGDVPAPCPSPSAAPGVGSVEQTPRKRLR.

Residue Arg107 is modified to Omega-N-methylarginine. The tract at residues 124–153 is disordered; it reads ESLDGLEEAPEQLPSVPVPAPASTPPPVPV. Residues 139–153 are compositionally biased toward pro residues; the sequence is VPVPAPASTPPPVPV. 9 consecutive repeat copies span residues 156–159, 160–163, 180–183, 184–187, 188–191, 198–201, 202–205, 206–209, and 210–213. A 9 X 4 AA repeats of P-A-P-A region spans residues 156-213; it reads PAPAPAPAPVAAPVAAPVAVAVLAPAPAPAPAPAPAPAPVAAPAPAPAPAPAPAPAPA. Residues 181–217 are compositionally biased toward pro residues; sequence APAPAPAPAPAPAPVAAPAPAPAPAPAPAPAPAPAPD. The segment at 181-260 is disordered; the sequence is APAPAPAPAP…AAGTAAASAN (80 aa). Polar residues predominate over residues 223–233; that stretch reads SAEQGANQGQR. Over residues 251–260 the composition is skewed to low complexity; that stretch reads AAGTAAASAN. Position 268 is a phosphoserine (Ser268). The Nuclear localization signal signature appears at 278-281; the sequence is KRKR. The tract at residues 278–316 is disordered; the sequence is KRKRSAPEKSSGDVPAPCPSPSAAPGVGSVEQTPRKRLR.

It belongs to the CDI family. Interacts with PCNA. In terms of tissue distribution, expressed in the heart, brain, lung, skeletal muscle, kidney, pancreas and testis. Expressed in the eye. High levels are seen in the placenta while low levels are seen in the liver.

Its subcellular location is the nucleus. In terms of biological role, potent tight-binding inhibitor of several G1 cyclin/CDK complexes (cyclin E-CDK2, cyclin D2-CDK4, and cyclin A-CDK2) and, to lesser extent, of the mitotic cyclin B-CDC2. Negative regulator of cell proliferation. May play a role in maintenance of the non-proliferative state throughout life. The polypeptide is Cyclin-dependent kinase inhibitor 1C (CDKN1C) (Homo sapiens (Human)).